The following is a 359-amino-acid chain: 3-isopropylmalate dehydrogenase (359 aa).

4 residues coordinate substrate: arginine 97, arginine 107, arginine 135, and aspartate 224. Mg(2+)-binding residues include aspartate 224, aspartate 248, and aspartate 252. Residue 282–294 (GSAPDIAGKDIAN) coordinates NAD(+).

It belongs to the isocitrate and isopropylmalate dehydrogenases family. LeuB type 1 subfamily. As to quaternary structure, homodimer. Requires Mg(2+) as cofactor. The cofactor is Mn(2+).

It localises to the cytoplasm. The catalysed reaction is (2R,3S)-3-isopropylmalate + NAD(+) = 4-methyl-2-oxopentanoate + CO2 + NADH. It functions in the pathway amino-acid biosynthesis; L-leucine biosynthesis; L-leucine from 3-methyl-2-oxobutanoate: step 3/4. Functionally, catalyzes the oxidation of 3-carboxy-2-hydroxy-4-methylpentanoate (3-isopropylmalate) to 3-carboxy-4-methyl-2-oxopentanoate. The product decarboxylates to 4-methyl-2 oxopentanoate. This is 3-isopropylmalate dehydrogenase from Prochlorococcus marinus (strain NATL2A).